Consider the following 88-residue polypeptide: Large ribosomal subunit protein uL29 (88 aa).

The protein belongs to the universal ribosomal protein uL29 family.

This chain is Large ribosomal subunit protein uL29 (rpl29), found in Sulfurisphaera tokodaii (strain DSM 16993 / JCM 10545 / NBRC 100140 / 7) (Sulfolobus tokodaii).